The chain runs to 231 residues: Lecithin retinol acyltransferase (231 aa).

Residues 1–194 lie on the Cytoplasmic side of the membrane; sequence MKNPMLEAAS…VKIIIRDQRS (194 aa). An LRAT domain is found at 50 to 177; sequence VLEVSRTHFI…CRYGSRISPQ (128 aa). Active-site residues include His-60 and His-72. The active-site Acyl-thioester intermediate is the Cys-161. The chain crosses the membrane as a helical span at residues 195–215; that stretch reads SLASAVLGLASIVYTGLASYM. At 216-231 the chain is on the lumenal side; the sequence is TLPAICIPFCLWMMSG.

This sequence belongs to the H-rev107 family. In terms of tissue distribution, hepatic stellate cells and endothelial cells (at protein level).

The protein localises to the endoplasmic reticulum membrane. The protein resides in the rough endoplasmic reticulum. It is found in the endosome. Its subcellular location is the multivesicular body. It localises to the cytoplasm. The protein localises to the perinuclear region. It catalyses the reaction all-trans-retinol--[retinol-binding protein] + a 1,2-diacyl-sn-glycero-3-phosphocholine = apo--[retinol-binding protein] + an all-trans-retinyl ester + a 2-acyl-sn-glycero-3-phosphocholine. It carries out the reaction 1,2-diheptanoyl-sn-glycero-3-phosphocholine + all-trans-retinol--[retinol-binding protein] = all-trans-retinyl heptanoate + 2-heptanoyl-sn-glycero-3-phosphocholine + apo--[retinol-binding protein]. The catalysed reaction is 1,2-dioctanoyl-sn-glycero-3-phosphocholine + all-trans-retinol--[retinol-binding protein] = 2-octanoyl-sn-glycero-3-phosphocholine + all-trans-retinyl octanoate + apo--[retinol-binding protein]. The enzyme catalyses all-trans-retinol--[retinol-binding protein] + 1,2-dihexadecanoyl-sn-glycero-3-phosphocholine = apo--[retinol-binding protein] + all-trans-retinyl hexadecanoate + 2-hexadecanoyl-sn-glycero-3-phosphocholine. It catalyses the reaction 1,2-didodecanoyl-sn-glycero-3-phosphocholine + all-trans-retinol--[retinol-binding protein] = 2-dodecanoyl-sn-glycero-3-phosphocholine + all-trans-retinyl dodecanoate + apo--[retinol-binding protein]. It carries out the reaction 1,2-dihexadecanoyl-sn-glycero-3-phosphocholine + all-trans-retinol = all-trans-retinyl hexadecanoate + 2-hexadecanoyl-sn-glycero-3-phosphocholine. The protein operates within cofactor metabolism; retinol metabolism. Inhibited by all-trans-retinyl alpha-bromoacetate and N-boc-L-biocytinyl-11-aminoundecane chloro-methyl ketone (BACMK). Transfers the acyl group from the sn-1 position of phosphatidylcholine to all-trans retinol, producing all-trans retinyl esters. Retinyl esters are storage forms of vitamin A. LRAT plays a critical role in vision. It provides the all-trans retinyl ester substrates for the isomerohydrolase which processes the esters into 11-cis-retinol in the retinal pigment epithelium; due to a membrane-associated alcohol dehydrogenase, 11 cis-retinol is oxidized and converted into 11-cis-retinaldehyde which is the chromophore for rhodopsin and the cone photopigments. Required for the survival of cone photoreceptors and correct rod photoreceptor cell morphology. The chain is Lecithin retinol acyltransferase (Lrat) from Mus musculus (Mouse).